A 153-amino-acid polypeptide reads, in one-letter code: UPF0756 membrane protein BA_4840/GBAA_4840/BAS4489 (153 aa).

4 consecutive transmembrane segments (helical) span residues 8–28 (FLFI…TVAI), 54–74 (LGVT…EIGF), 87–107 (WIAL…VQLL), and 117–137 (LVFG…GPLI).

It belongs to the UPF0756 family.

Its subcellular location is the cell membrane. This Bacillus anthracis protein is UPF0756 membrane protein BA_4840/GBAA_4840/BAS4489.